Reading from the N-terminus, the 340-residue chain is Outer membrane protein B (340 aa).

An N-terminal signal peptide occupies residues Met1–Ala26.

This sequence belongs to the chlamydial OMP family.

The protein resides in the cell outer membrane. The sequence is that of Outer membrane protein B (ompB) from Chlamydia muridarum (strain MoPn / Nigg).